The chain runs to 253 residues: uncharacterized protein (253 aa).

The span at 175–184 (NPTQTSPGKP) shows a compositional bias: polar residues. A disordered region spans residues 175-253 (NPTQTSPGKP…ATENEDRLPS (79 aa)). Ser-180 bears the Phosphoserine mark. Low complexity-rich tracts occupy residues 185 to 196 (STSESSQTDTST) and 203 to 214 (TPTTTRASSYTT). Residues 215 to 242 (LVSTSNQVSNEAEASAVETSANQAQNTE) show a composition bias toward polar residues.

It belongs to the TRAPP small subunits family. BET3 subfamily.

This is an uncharacterized protein from Schizosaccharomyces pombe (strain 972 / ATCC 24843) (Fission yeast).